The primary structure comprises 311 residues: Ribonuclease HIII (311 aa).

The region spanning 95 to 311 (MSIVGSDEVG…NTEKAFRLLK (217 aa)) is the RNase H type-2 domain. A divalent metal cation contacts are provided by Asp-101, Glu-102, and Asp-206.

The protein belongs to the RNase HII family. RnhC subfamily. It depends on Mn(2+) as a cofactor. Mg(2+) serves as cofactor.

The protein resides in the cytoplasm. It catalyses the reaction Endonucleolytic cleavage to 5'-phosphomonoester.. In terms of biological role, endonuclease that specifically degrades the RNA of RNA-DNA hybrids. This Bacillus cereus (strain ATCC 10987 / NRS 248) protein is Ribonuclease HIII.